The following is a 455-amino-acid chain: Chromosomal replication initiator protein DnaA (455 aa).

The interval 1–74 is domain I, interacts with DnaA modulators; it reads MSEQEIWEKV…LYEAIGHEIA (74 aa). The domain II stretch occupies residues 74 to 116; that stretch reads APVFYTEEELKSLHTSEQKEENQPEQPAKKYTPGVDEAVIGGE. The segment covering 85 to 95 has biased composition (basic and acidic residues); it reads SLHTSEQKEEN. Residues 85 to 104 form a disordered region; it reads SLHTSEQKEENQPEQPAKKY. Residues 117-333 are domain III, AAA+ region; sequence QFNTHNTFET…GALTRVLAFS (217 aa). ATP-binding residues include Gly-161, Gly-163, Lys-164, and Thr-165. Positions 334-455 are domain IV, binds dsDNA; that stretch reads KLQGQPITTE…ENLEKEIRNQ (122 aa).

Belongs to the DnaA family. In terms of assembly, oligomerizes as a right-handed, spiral filament on DNA at oriC.

The protein resides in the cytoplasm. Its function is as follows. Plays an essential role in the initiation and regulation of chromosomal replication. ATP-DnaA binds to the origin of replication (oriC) to initiate formation of the DNA replication initiation complex once per cell cycle. Binds the DnaA box (a 9 base pair repeat at the origin) and separates the double-stranded (ds)DNA. Forms a right-handed helical filament on oriC DNA; dsDNA binds to the exterior of the filament while single-stranded (ss)DNA is stabiized in the filament's interior. The ATP-DnaA-oriC complex binds and stabilizes one strand of the AT-rich DNA unwinding element (DUE), permitting loading of DNA polymerase. After initiation quickly degrades to an ADP-DnaA complex that is not apt for DNA replication. Binds acidic phospholipids. This chain is Chromosomal replication initiator protein DnaA, found in Staphylococcus saprophyticus subsp. saprophyticus (strain ATCC 15305 / DSM 20229 / NCIMB 8711 / NCTC 7292 / S-41).